Consider the following 307-residue polypeptide: Ribonuclease Z (307 aa).

Residues H63, H65, D67, H68, H140, D211, and H269 each coordinate Zn(2+). Catalysis depends on D67, which acts as the Proton acceptor.

Belongs to the RNase Z family. In terms of assembly, homodimer. Zn(2+) is required as a cofactor.

It catalyses the reaction Endonucleolytic cleavage of RNA, removing extra 3' nucleotides from tRNA precursor, generating 3' termini of tRNAs. A 3'-hydroxy group is left at the tRNA terminus and a 5'-phosphoryl group is left at the trailer molecule.. Zinc phosphodiesterase, which displays some tRNA 3'-processing endonuclease activity. Probably involved in tRNA maturation, by removing a 3'-trailer from precursor tRNA. This chain is Ribonuclease Z, found in Bacillus licheniformis (strain ATCC 14580 / DSM 13 / JCM 2505 / CCUG 7422 / NBRC 12200 / NCIMB 9375 / NCTC 10341 / NRRL NRS-1264 / Gibson 46).